The primary structure comprises 789 residues: Disintegrin and metalloproteinase domain-containing protein 7 (789 aa).

An N-terminal signal peptide occupies residues Met-1 to Glu-25. Residues Gly-26 to Thr-176 constitute a propeptide that is removed on maturation. N-linked (GlcNAc...) asparagine glycans are attached at residues Asn-84, Asn-167, and Asn-174. The Extracellular portion of the chain corresponds to Lys-177–Val-668. The Peptidase M12B domain maps to Lys-199–Pro-393. 4 disulfides stabilise this stretch: Cys-310-Cys-388, Cys-350-Cys-372, Cys-352-Cys-357, and Cys-459-Cys-479. The Disintegrin domain occupies Tyr-401–Asn-487. N-linked (GlcNAc...) asparagine glycosylation is found at Asn-583, Asn-628, and Asn-664. A helical transmembrane segment spans residues Ser-669–Ile-689. Over Arg-690–Gly-789 the chain is Cytoplasmic. A compositionally biased stretch (basic and acidic residues) spans Asp-762–Gln-771. Residues Asp-762–Gly-789 form a disordered region. Residues Asn-772–Gly-789 are compositionally biased toward polar residues.

As to quaternary structure, interacts with ITM2B in sperm; the interaction increases following capacitation. Interacts with HSPA5 and CANX. Expressed specifically in the caput region of the epididymis (at protein level).

The protein localises to the membrane. Its function is as follows. Required for normal male fertility via maintenance of epithelial cell morphology in the caput epididymis and subsequently correct epididymis lumen structure required for sperm development. Plays a role in sperm motility, flagella morphology and tyrosine phosphorylation during sperm capacitance. Plays a role in normal expression levels of HSPA5, ITM2B and ADAM2 in sperm both prior to and post-capacitation. This is a non catalytic metalloprotease-like protein. The protein is Disintegrin and metalloproteinase domain-containing protein 7 of Rattus norvegicus (Rat).